We begin with the raw amino-acid sequence, 753 residues long: Polyribonucleotide nucleotidyltransferase (753 aa).

Mg(2+) contacts are provided by aspartate 543 and aspartate 549. The KH domain occupies 609–668 (PRITTVKIPVAKIGELIGPKGKNINALTEETGANISIEDDGTVFISAADGASAEAAIEKI). One can recognise an S1 motif domain in the interval 680–749 (GERFLGTVVK…NRGKISLVPV (70 aa)).

It belongs to the polyribonucleotide nucleotidyltransferase family. The cofactor is Mg(2+).

Its subcellular location is the cytoplasm. The enzyme catalyses RNA(n+1) + phosphate = RNA(n) + a ribonucleoside 5'-diphosphate. Involved in mRNA degradation. Catalyzes the phosphorolysis of single-stranded polyribonucleotides processively in the 3'- to 5'-direction. This chain is Polyribonucleotide nucleotidyltransferase, found in Corynebacterium glutamicum (strain R).